Consider the following 392-residue polypeptide: MFQIGEALMGQGAELAHVDLMIGDKGGPVGQAFANGLTQLSVGHTPLLSVIRPNLPPKPSTLIIPKVTVKNMEQAGKIFGPAQAAVAKAVADSVEEGVISKDQVEEIVIVASVFIHPDAQDYNKIYRYNYGATKLAIKRALGGFPDINTVLEESNKSTHAIMGFKVTRLWDPPYLQVAFDNPDIEFVQSAISQIPKSDHVIIEAGTPLIKRYGMDVISRIREVRPDAFIVADLKTLDTGNLEARMVADAAGDAIVVSALAPISTIDKLIEEAHKTGIYAVMDTLNQQDPISVLKQLKVMPDVIELHRGIDIEATEHAWGNIAEIKKIAPKILVAVAGGVRLDKVPVALGQGADILVVGRAITNSKDVREVAEQFINSLNKPEIDQFRVMTDF.

The tract at residues 1-161 (MFQIGEALMG…EESNKSTHAI (161 aa)) is formaldehyde-activating enzyme. His17 functions as the Proton donor in the catalytic mechanism. Substrate contacts are provided by Asp19, Leu48, Lys66, Thr68, and Gln83. The interval 162–392 (MGFKVTRLWD…IDQFRVMTDF (231 aa)) is 3-hexulose-6-phosphate synthase.

In the N-terminal section; belongs to the formaldehyde-activating enzyme family. It in the C-terminal section; belongs to the HPS/KGPDC family. HPS subfamily.

It carries out the reaction 5,6,7,8-tetrahydromethanopterin + formaldehyde = 5,10-methylenetetrahydromethanopterin + H2O. The enzyme catalyses D-ribulose 5-phosphate + formaldehyde = D-arabino-hex-3-ulose 6-phosphate. The protein operates within carbohydrate biosynthesis; D-ribose 5-phosphate biosynthesis. Catalyzes the condensation of formaldehyde with tetrahydromethanopterin (H(4)MPT) to 5,10-methylenetetrahydromethanopterin. Its function is as follows. Catalyzes the reversible formation of ribulose-5-phosphate and formaldehyde from 3-hexulose-6-phosphate. This Methanosarcina barkeri (strain Fusaro / DSM 804) protein is Bifunctional enzyme Fae/Hps.